The chain runs to 254 residues: Ribosomal RNA small subunit methyltransferase G (254 aa).

S-adenosyl-L-methionine contacts are provided by residues Gly-92, 143 to 144, and Arg-156; that span reads AE.

Belongs to the methyltransferase superfamily. RNA methyltransferase RsmG family.

The protein resides in the cytoplasm. Functionally, specifically methylates the N7 position of a guanine in 16S rRNA. The protein is Ribosomal RNA small subunit methyltransferase G of Leptospira interrogans serogroup Icterohaemorrhagiae serovar copenhageni (strain Fiocruz L1-130).